The following is a 58-amino-acid chain: Large ribosomal subunit protein bL32 (58 aa).

The interval 1–24 is disordered; it reads MAVPKKKTSKSKRDKRKATWKRKA.

The protein belongs to the bacterial ribosomal protein bL32 family.

This Synechococcus sp. (strain ATCC 27144 / PCC 6301 / SAUG 1402/1) (Anacystis nidulans) protein is Large ribosomal subunit protein bL32.